The sequence spans 717 residues: Glycine--tRNA ligase beta subunit (717 aa).

Belongs to the class-II aminoacyl-tRNA synthetase family. Tetramer of two alpha and two beta subunits.

The protein resides in the cytoplasm. It catalyses the reaction tRNA(Gly) + glycine + ATP = glycyl-tRNA(Gly) + AMP + diphosphate. In Agrobacterium fabrum (strain C58 / ATCC 33970) (Agrobacterium tumefaciens (strain C58)), this protein is Glycine--tRNA ligase beta subunit.